A 267-amino-acid chain; its full sequence is AMP/ADP-polyphosphate phosphotransferase (267 aa).

It belongs to the polyphosphate kinase 2 (PPK2) family. Class III subfamily. The cofactor is Mn(2+).

The catalysed reaction is [phosphate](n) + ADP = [phosphate](n+1) + AMP. The enzyme catalyses [phosphate](n) + ATP = [phosphate](n+1) + ADP. Functionally, uses inorganic polyphosphate (polyP) as a donor to convert both AMP to ADP and ADP to ATP. Can also use GMP, CMP, UMP, GDP, CDP and UDP. This chain is AMP/ADP-polyphosphate phosphotransferase, found in Meiothermus ruber (strain ATCC 35948 / DSM 1279 / VKM B-1258 / 21) (Thermus ruber).